A 242-amino-acid chain; its full sequence is 7-cyano-7-deazaguanine synthase (242 aa).

ATP is bound at residue 12 to 22 (FSGGQDSATCL). Cys-200, Cys-215, Cys-218, and Cys-221 together coordinate Zn(2+).

This sequence belongs to the QueC family. Zn(2+) is required as a cofactor.

The enzyme catalyses 7-carboxy-7-deazaguanine + NH4(+) + ATP = 7-cyano-7-deazaguanine + ADP + phosphate + H2O + H(+). The protein operates within purine metabolism; 7-cyano-7-deazaguanine biosynthesis. Its function is as follows. Catalyzes the ATP-dependent conversion of 7-carboxy-7-deazaguanine (CDG) to 7-cyano-7-deazaguanine (preQ(0)). The chain is 7-cyano-7-deazaguanine synthase from Gluconobacter oxydans (strain 621H) (Gluconobacter suboxydans).